The following is a 347-amino-acid chain: MIYRYLRPWLFKLEPETAHALTLNCLKWFYCYWLINRRLQRFPQKPTVVFGIEFPNPVGLAAGLDKNGEYMDELLGLGFGFIEVGAVTPKPQPGNSKPRIFRLPQARALINRMGFNNLGVDYLVEQLKRRKVKGIVGVNIGKNLTTPLEKAHEDYQNCFEKLYSYVDYVTINISSPNTPELRQLQSERYLADLLTRLKEDQRRLEDQYHKRVPLFLKIAPDLTPEEIQTIATLALQHRIEGIVATNTSCSRQGTEKLPNANEAGGLSGKPLFPMTLQVVKQLHSFLGDEIPIVAVGGIFSGENAQTLINAGARLVQLYTGLIYEGPELVKNIVEFLTLSRQTREGIN.

FMN-binding positions include 62 to 66 and alanine 86; that span reads AGLDK. Position 66 (lysine 66) interacts with substrate. 111 to 115 is a binding site for substrate; the sequence is NRMGF. 2 residues coordinate FMN: asparagine 139 and asparagine 172. A substrate-binding site is contributed by asparagine 172. The active-site Nucleophile is the serine 175. Asparagine 177 contributes to the substrate binding site. The FMN site is built by lysine 217 and threonine 245. A substrate-binding site is contributed by 246-247; sequence NT. Residues glycine 268, glycine 297, and 318 to 319 each bind FMN; that span reads YT.

The protein belongs to the dihydroorotate dehydrogenase family. Type 2 subfamily. Monomer. FMN is required as a cofactor.

The protein resides in the cell membrane. It catalyses the reaction (S)-dihydroorotate + a quinone = orotate + a quinol. Its pathway is pyrimidine metabolism; UMP biosynthesis via de novo pathway; orotate from (S)-dihydroorotate (quinone route): step 1/1. In terms of biological role, catalyzes the conversion of dihydroorotate to orotate with quinone as electron acceptor. The protein is Dihydroorotate dehydrogenase (quinone) of Coxiella burnetii (strain CbuK_Q154) (Coxiella burnetii (strain Q154)).